Reading from the N-terminus, the 773-residue chain is Beta-hexosaminidase B (773 aa).

A signal peptide spans 1-19 (MKFNRLMALLFGVSSPLYA). 3 disulfide bridges follow: cysteine 46-cysteine 53, cysteine 389-cysteine 397, and cysteine 496-cysteine 542. Glutamate 531 functions as the Proton donor in the catalytic mechanism.

It belongs to the glycosyl hydrolase 20 family.

It catalyses the reaction Hydrolysis of terminal non-reducing N-acetyl-D-hexosamine residues in N-acetyl-beta-D-hexosaminides.. The protein is Beta-hexosaminidase B (nag096) of Pseudoalteromonas piscicida.